Here is a 254-residue protein sequence, read N- to C-terminus: Ubiquinone/menaquinone biosynthesis C-methyltransferase UbiE (254 aa).

Residues threonine 77, aspartate 98, 126 to 127 (NA), and serine 143 each bind S-adenosyl-L-methionine.

This sequence belongs to the class I-like SAM-binding methyltransferase superfamily. MenG/UbiE family.

It carries out the reaction a 2-demethylmenaquinol + S-adenosyl-L-methionine = a menaquinol + S-adenosyl-L-homocysteine + H(+). The enzyme catalyses a 2-methoxy-6-(all-trans-polyprenyl)benzene-1,4-diol + S-adenosyl-L-methionine = a 5-methoxy-2-methyl-3-(all-trans-polyprenyl)benzene-1,4-diol + S-adenosyl-L-homocysteine + H(+). Its pathway is quinol/quinone metabolism; menaquinone biosynthesis; menaquinol from 1,4-dihydroxy-2-naphthoate: step 2/2. It functions in the pathway cofactor biosynthesis; ubiquinone biosynthesis. Its function is as follows. Methyltransferase required for the conversion of demethylmenaquinol (DMKH2) to menaquinol (MKH2) and the conversion of 2-polyprenyl-6-methoxy-1,4-benzoquinol (DDMQH2) to 2-polyprenyl-3-methyl-6-methoxy-1,4-benzoquinol (DMQH2). This is Ubiquinone/menaquinone biosynthesis C-methyltransferase UbiE from Hydrogenovibrio crunogenus (strain DSM 25203 / XCL-2) (Thiomicrospira crunogena).